A 253-amino-acid polypeptide reads, in one-letter code: Ribosome-inactivating protein saporin-7 (253 aa).

The active site involves Glu-176.

Belongs to the ribosome-inactivating protein family. Type 1 RIP subfamily.

It catalyses the reaction Endohydrolysis of the N-glycosidic bond at one specific adenosine on the 28S rRNA.. Ribosome-inactivating protein of type 1, inhibits protein synthesis in animal cells. The protein is Ribosome-inactivating protein saporin-7 (SAP7) of Saponaria officinalis (Common soapwort).